The primary structure comprises 1039 residues: Kinesin-like protein KIN-5B (1039 aa).

Positions 48-390 constitute a Kinesin motor domain; the sequence is NVQVILRCKP…LDYAYRAKNI (343 aa). Position 134–141 (134–141) interacts with ATP; it reads GQTGTGKT. The disordered stretch occupies residues 1008–1039; the sequence is TLSEEHTSLEKISTKQGLGEANNRTPFLEVNK. Residues 1010–1020 show a composition bias toward basic and acidic residues; sequence SEEHTSLEKIS.

Belongs to the TRAFAC class myosin-kinesin ATPase superfamily. Kinesin family. KIN-5/BimC subfamily.

The protein resides in the cytoplasm. It localises to the cytoskeleton. It is found in the spindle. Its function is as follows. Responsible for microtubule translocation. May be important for the organization of phragmoplast-specific arrays of microtubules. Plays an essential role in stabilizing the mitotic spindle. Required during mitotic cytokinesis. The chain is Kinesin-like protein KIN-5B from Arabidopsis thaliana (Mouse-ear cress).